A 180-amino-acid chain; its full sequence is Protein C2-DOMAIN ABA-RELATED 10 (180 aa).

One can recognise a C2 domain in the interval 1-105 (MDQKPLGLLT…EALKMGMELL (105 aa)). R22, D23, D28, D74, W75, D76, and D82 together coordinate Ca(2+).

The protein belongs to the plant CAR protein family. As to quaternary structure, binds to PYR/PYL/RCAR abscisic acid intracellular receptors in an ABA-independent manner, both at the plasma membrane and in the nucleus.

It localises to the cell membrane. It is found in the nucleus. Stimulates the GTPase/ATPase activities of Obg-like ATPases. Mediates the transient calcium-dependent interaction of PYR/PYL/RCAR abscisic acid (ABA) receptors with the plasma membrane and thus regulates ABA sensitivity. This Arabidopsis thaliana (Mouse-ear cress) protein is Protein C2-DOMAIN ABA-RELATED 10.